A 35-amino-acid chain; its full sequence is Cytochrome b6-f complex subunit 7 (35 aa).

A helical membrane pass occupies residues 9-27 (AGLSIVLTLVGVALGYGIL).

The protein belongs to the PetM family. In terms of assembly, the 4 large subunits of the cytochrome b6-f complex are cytochrome b6, subunit IV (17 kDa polypeptide, PetD), cytochrome f and the Rieske protein, while the 4 small subunits are PetG, PetL, PetM and PetN. The complex functions as a dimer.

Its subcellular location is the cellular thylakoid membrane. Functionally, component of the cytochrome b6-f complex, which mediates electron transfer between photosystem II (PSII) and photosystem I (PSI), cyclic electron flow around PSI, and state transitions. In Synechococcus sp. (strain JA-3-3Ab) (Cyanobacteria bacterium Yellowstone A-Prime), this protein is Cytochrome b6-f complex subunit 7.